Reading from the N-terminus, the 88-residue chain is Small ribosomal subunit protein bS16 (88 aa).

Belongs to the bacterial ribosomal protein bS16 family.

The polypeptide is Small ribosomal subunit protein bS16 (Leptospira borgpetersenii serovar Hardjo-bovis (strain L550)).